The chain runs to 1360 residues: NAD(+) hydrolase sarm1 (1360 aa).

The disordered stretch occupies residues 27–52; the sequence is RITGGPGSISTTSASAITAPSTMSQT. A compositionally biased stretch (low complexity) spans 34–48; the sequence is SISTTSASAITAPST. SAM domains follow at residues 690-754 and 760-828; these read WSVE…LKRM and KDTA…NSLP. Positions 837–981 constitute a TIR domain; sequence KTLDVFVSYR…KLERFLRGEK (145 aa). NAD(+) contacts are provided by residues 846-847 and Glu-876; that span reads RR. Glu-919 is an active-site residue. The segment covering 997 to 1010 has biased composition (polar residues); that stretch reads VSYQRMHSNDSDYQ. Disordered stretches follow at residues 997-1026, 1046-1085, 1121-1148, 1192-1217, and 1249-1343; these read VSYQ…GGGG, GQAN…SQIL, SAAG…LLDQ, NDSV…KSRS, and IPMT…GNNK. A compositionally biased stretch (gly residues) spans 1012-1026; it reads GGAGAGSGAGTGGGG. Positions 1046-1073 are enriched in polar residues; that stretch reads GQANHQANRYRQSPSPARQRGSTSQLSG. Residues 1125–1135 are compositionally biased toward gly residues; sequence LGHGSGSGMGS. Low complexity predominate over residues 1321-1335; that stretch reads SLTSNKTSNSSLGSN.

It belongs to the SARM1 family. As to expression, widely expressed in larval brains and adult brains.

It is found in the cytoplasm. The protein resides in the cell projection. The protein localises to the axon. It catalyses the reaction NAD(+) + H2O = ADP-D-ribose + nicotinamide + H(+). The catalysed reaction is NAD(+) = cyclic ADP-beta-D-ribose + nicotinamide + H(+). Its function is as follows. NAD(+) hydrolase, which plays a key role in axonal degeneration following injury by regulating NAD(+) metabolism. Acts as a negative regulator of MYD88- and TRIF-dependent toll-like receptor signaling pathway by promoting Wallerian degeneration, an injury-induced form of programmed subcellular death which involves degeneration of an axon distal to the injury site. Wallerian degeneration is triggered by NAD(+) depletion: in response to injury, it is activated and catalyzes cleavage of NAD(+) into ADP-D-ribose (ADPR), cyclic ADPR (cADPR) and nicotinamide; NAD(+) cleavage promoting axon destruction. Involved in the down-regulation of the tracheal immune response to Gram-negative bacteria. This is likely by mediating Tollo signaling in the tracheal epithelium. This chain is NAD(+) hydrolase sarm1, found in Drosophila melanogaster (Fruit fly).